A 227-amino-acid chain; its full sequence is Isopentenyl-diphosphate Delta-isomerase 1 (227 aa).

K36 contacts substrate. Mg(2+) is bound by residues H40 and H51. The region spanning 49–199 (LLHRAFSVFL…EIKITPWFKI (151 aa)) is the Nudix hydrolase domain. R70 and K74 together coordinate substrate. Residue C86 is part of the active site. S87 contributes to the substrate binding site. Mg(2+) contacts are provided by E146 and E148. The active site involves E148. K176 bears the N6-acetyllysine mark. A Microbody targeting signal motif is present at residues 225–227 (YRI).

Belongs to the IPP isomerase type 1 family. In terms of assembly, monomer. Mg(2+) serves as cofactor.

Its subcellular location is the peroxisome. It carries out the reaction isopentenyl diphosphate = dimethylallyl diphosphate. It functions in the pathway isoprenoid biosynthesis; dimethylallyl diphosphate biosynthesis; dimethylallyl diphosphate from isopentenyl diphosphate: step 1/1. In terms of biological role, catalyzes the 1,3-allylic rearrangement of the homoallylic substrate isopentenyl (IPP) to its highly electrophilic allylic isomer, dimethylallyl diphosphate (DMAPP). This chain is Isopentenyl-diphosphate Delta-isomerase 1 (IDI1), found in Pongo abelii (Sumatran orangutan).